Consider the following 201-residue polypeptide: Putative manganese efflux pump MntP (201 aa).

The next 5 helical transmembrane spans lie at 6-26 (CLAVAVALAMDAFAVAIATGI), 39-59 (LAFHFGLFQALMPVAGWTLGL), 105-125 (LTLIMLAVATSIDALAVGLSL), 127-147 (VLGIDIVTPAIVIGVVCLLFT), and 169-189 (LAGGVVLIGIGLRILYEHGVF).

Belongs to the MntP (TC 9.B.29) family.

It is found in the cell inner membrane. Probably functions as a manganese efflux pump. This is Putative manganese efflux pump MntP from Nitratidesulfovibrio vulgaris (strain ATCC 29579 / DSM 644 / CCUG 34227 / NCIMB 8303 / VKM B-1760 / Hildenborough) (Desulfovibrio vulgaris).